Here is a 501-residue protein sequence, read N- to C-terminus: uncharacterized protein (501 aa).

The chain crosses the membrane as a helical span at residues 26 to 46 (ILLLLLGLIVLVNIGINVATM). Disordered regions lie at residues 316–384 (RGTE…VRRR) and 409–501 (EASH…EKLN). A compositionally biased stretch (low complexity) spans 476–490 (RSSSLPPASTSTLRP).

The protein resides in the membrane. This is an uncharacterized protein from Homo sapiens (Human).